The chain runs to 1430 residues: Bromodomain-containing protein homolog (1430 aa).

Residues 23 to 49 (FACPVRGCDRSYKTIMGLQYHLMKYDH) form a C2H2-type zinc finger. Residues 51–111 (NPQPLTPVLT…AGGGSASGVS (61 aa)) are disordered. Residues 62-81 (SRKKARSRSGGHHSTPRPHK) show a composition bias toward basic residues. The segment at 283–333 (DAVCCICLDGECQNTNVILFCDMCNLAVHQDCYGVPYIPEGQWLCRRCLQS) adopts a PHD-type 1 zinc-finger fold. Zn(2+) contacts are provided by C286, C289, C303, C306, H311, C314, C327, and C330. The segment at 337–370 (PVNCVLCPNAGGAFKQTDHGQWAHVVCALWIPEV) adopts a C2HC pre-PHD-type zinc-finger fold. The PHD-type 2 zinc finger occupies 394-457 (LTCYVCKEKG…QKFAYCHAHT (64 aa)). One can recognise a Bromo domain in the interval 611 to 715 (LQLNPLEAAL…DQAAPLFVQV (105 aa)). The segment covering 796 to 805 (KARFAARHSS) has biased composition (basic residues). Disordered regions lie at residues 796 to 887 (KARF…SSPV), 901 to 942 (AQAA…TTAA), 1012 to 1054 (ANLP…QALP), and 1076 to 1301 (QRDV…GQKP). Residues 842–857 (HDDDDEEEDSDEDSMG) are compositionally biased toward acidic residues. Over residues 865-887 (LLNSTQTPPCSPIKSLNNSSSPV) the composition is skewed to polar residues. Composition is skewed to low complexity over residues 922–942 (NSQSSNTQSTSGSSSSVTTAA), 1034–1043 (SSSMSPKKSP), and 1085–1107 (APSQSSSPCSSCSDFSMSGSCSD). Over residues 1108–1120 (FDSDEASEGDADG) the composition is skewed to acidic residues. Over residues 1121 to 1137 (DPDRDGGRSRSEERDST) the composition is skewed to basic and acidic residues. Composition is skewed to polar residues over residues 1151–1165 (ASLNNVQGNNGNMAI) and 1265–1278 (NTTAAGSAPLTNNN). Over residues 1281 to 1293 (KHSEDSASSERHN) the composition is skewed to basic and acidic residues. One can recognise a PWWP domain in the interval 1305–1378 (PLQLVWAKCR…TWQWLPANKL (74 aa)).

In terms of assembly, component of the Enok complex composed of at least Br140, enok, Eaf6 and Ing5. As part of the Enok complex, interacts with elg1 and the Elg1 RFC-like complex.

Its subcellular location is the nucleus. Functionally, scaffold subunit of the histone acetyltransferase (HAT) Enok complex which has histone H3 acetyltransferase activity. As part of the Enok complex, associates with the Elg1 RFC-like complex and down-regulates its PCNA-unloading function to promote the G1/S transition. May also play a role in maintaining the protein levels and stability of enok. This Drosophila melanogaster (Fruit fly) protein is Bromodomain-containing protein homolog.